A 423-amino-acid polypeptide reads, in one-letter code: Putative competence-damage inducible protein (423 aa).

It belongs to the CinA family.

The chain is Putative competence-damage inducible protein from Streptococcus pyogenes serotype M1.